A 320-amino-acid chain; its full sequence is Esterase LipI (320 aa).

Catalysis depends on residues S165, D261, and H291.

The protein belongs to the 'GDXG' lipolytic enzyme family.

It carries out the reaction a fatty acid ester + H2O = an aliphatic alcohol + a fatty acid + H(+). The catalysed reaction is a butanoate ester + H2O = an aliphatic alcohol + butanoate + H(+). The enzyme catalyses an octanoate ester + H2O = an aliphatic alcohol + octanoate + H(+). It catalyses the reaction decanoate ester + H2O = decanoate + an aliphatic alcohol + H(+). It carries out the reaction an acetyl ester + H2O = an aliphatic alcohol + acetate + H(+). The catalysed reaction is a dodecanoate ester + H2O = an aliphatic alcohol + dodecanoate + H(+). Inhibited by ionic detergents SDS (anions) and CTAB (cationic). Strongly inhibited by Zn(2+). Esterase that can hydrolyze short-chain esters with the carbon chain containing 2 to 12 carbon atoms. In vitro, pNP-butyrate is the preferred substrate. The protein is Esterase LipI of Mycobacterium tuberculosis (strain ATCC 25618 / H37Rv).